The sequence spans 257 residues: Hydroxyacylglutathione hydrolase (257 aa).

7 residues coordinate Zn(2+): His-54, His-56, Asp-58, His-59, His-113, Asp-137, and His-175.

This sequence belongs to the metallo-beta-lactamase superfamily. Glyoxalase II family. Monomer. Zn(2+) serves as cofactor.

It carries out the reaction an S-(2-hydroxyacyl)glutathione + H2O = a 2-hydroxy carboxylate + glutathione + H(+). Its pathway is secondary metabolite metabolism; methylglyoxal degradation; (R)-lactate from methylglyoxal: step 2/2. In terms of biological role, thiolesterase that catalyzes the hydrolysis of S-D-lactoyl-glutathione to form glutathione and D-lactic acid. This chain is Hydroxyacylglutathione hydrolase, found in Nostoc punctiforme (strain ATCC 29133 / PCC 73102).